The primary structure comprises 461 residues: Fumarate hydratase class II (461 aa).

Substrate-binding positions include 97-99, Arg125, 128-131, 138-140, and Thr186; these read SGT, HPND, and SSN. His187 acts as the Proton donor/acceptor in catalysis. Residue Ser317 is part of the active site. Substrate is bound by residues Ser318 and 323 to 325; that span reads KVN.

The protein belongs to the class-II fumarase/aspartase family. Fumarase subfamily. As to quaternary structure, homotetramer.

It is found in the cytoplasm. The catalysed reaction is (S)-malate = fumarate + H2O. The protein operates within carbohydrate metabolism; tricarboxylic acid cycle; (S)-malate from fumarate: step 1/1. Its function is as follows. Involved in the TCA cycle. Catalyzes the stereospecific interconversion of fumarate to L-malate. This is Fumarate hydratase class II from Ralstonia nicotianae (strain ATCC BAA-1114 / GMI1000) (Ralstonia solanacearum).